The following is a 490-amino-acid chain: Protein nucleotidyltransferase YdiU (490 aa).

ATP contacts are provided by Gly94, Gly96, Arg97, Lys117, Asp129, Gly130, Arg180, and Arg187. The Proton acceptor role is filled by Asp256. Residues Asn257 and Asp266 each coordinate Mg(2+). Asp266 serves as a coordination point for ATP.

This sequence belongs to the SELO family. The cofactor is Mg(2+). Mn(2+) is required as a cofactor.

It carries out the reaction L-seryl-[protein] + ATP = 3-O-(5'-adenylyl)-L-seryl-[protein] + diphosphate. It catalyses the reaction L-threonyl-[protein] + ATP = 3-O-(5'-adenylyl)-L-threonyl-[protein] + diphosphate. The enzyme catalyses L-tyrosyl-[protein] + ATP = O-(5'-adenylyl)-L-tyrosyl-[protein] + diphosphate. The catalysed reaction is L-histidyl-[protein] + UTP = N(tele)-(5'-uridylyl)-L-histidyl-[protein] + diphosphate. It carries out the reaction L-seryl-[protein] + UTP = O-(5'-uridylyl)-L-seryl-[protein] + diphosphate. It catalyses the reaction L-tyrosyl-[protein] + UTP = O-(5'-uridylyl)-L-tyrosyl-[protein] + diphosphate. Its function is as follows. Nucleotidyltransferase involved in the post-translational modification of proteins. It can catalyze the addition of adenosine monophosphate (AMP) or uridine monophosphate (UMP) to a protein, resulting in modifications known as AMPylation and UMPylation. The sequence is that of Protein nucleotidyltransferase YdiU from Clostridium perfringens (strain SM101 / Type A).